The chain runs to 390 residues: Phosphopentomutase (390 aa).

Mn(2+) is bound by residues Asp-12, Asp-284, His-289, Asp-325, His-326, and His-337.

It belongs to the phosphopentomutase family. Mn(2+) serves as cofactor.

The protein resides in the cytoplasm. The enzyme catalyses 2-deoxy-alpha-D-ribose 1-phosphate = 2-deoxy-D-ribose 5-phosphate. The catalysed reaction is alpha-D-ribose 1-phosphate = D-ribose 5-phosphate. The protein operates within carbohydrate degradation; 2-deoxy-D-ribose 1-phosphate degradation; D-glyceraldehyde 3-phosphate and acetaldehyde from 2-deoxy-alpha-D-ribose 1-phosphate: step 1/2. Functionally, isomerase that catalyzes the conversion of deoxy-ribose 1-phosphate (dRib-1-P) and ribose 1-phosphate (Rib-1-P) to deoxy-ribose 5-phosphate (dRib-5-P) and ribose 5-phosphate (Rib-5-P), respectively. The chain is Phosphopentomutase from Macrococcus caseolyticus (strain JCSC5402) (Macrococcoides caseolyticum).